A 144-amino-acid chain; its full sequence is Transcription antitermination protein NusB (144 aa).

The protein belongs to the NusB family.

Functionally, involved in transcription antitermination. Required for transcription of ribosomal RNA (rRNA) genes. Binds specifically to the boxA antiterminator sequence of the ribosomal RNA (rrn) operons. This Haemophilus influenzae (strain PittEE) protein is Transcription antitermination protein NusB.